The following is a 368-amino-acid chain: Nicotinate-nucleotide--dimethylbenzimidazole phosphoribosyltransferase (368 aa).

Glu-314 acts as the Proton acceptor in catalysis. The disordered stretch occupies residues 344–368; it reads DRADGADNSADSGASAGTVASDPTV. The segment covering 349-360 has biased composition (low complexity); that stretch reads ADNSADSGASAG.

Belongs to the CobT family.

The enzyme catalyses 5,6-dimethylbenzimidazole + nicotinate beta-D-ribonucleotide = alpha-ribazole 5'-phosphate + nicotinate + H(+). It functions in the pathway nucleoside biosynthesis; alpha-ribazole biosynthesis; alpha-ribazole from 5,6-dimethylbenzimidazole: step 1/2. Catalyzes the synthesis of alpha-ribazole-5'-phosphate from nicotinate mononucleotide (NAMN) and 5,6-dimethylbenzimidazole (DMB). The sequence is that of Nicotinate-nucleotide--dimethylbenzimidazole phosphoribosyltransferase from Corynebacterium efficiens (strain DSM 44549 / YS-314 / AJ 12310 / JCM 11189 / NBRC 100395).